Consider the following 648-residue polypeptide: Leucine-rich repeat and WD repeat-containing protein 1 (648 aa).

4 LRR repeats span residues Lys22–Leu43, Lys48–Ser69, His70–Pro91, and Glu92–Ser113. The interval Val214 to Gly262 is disordered. The segment covering Arg226–Lys237 has biased composition (basic and acidic residues). The residue at position 259 (Ser259) is a Phosphoserine. WD repeat units follow at residues Ala392–Lys432, Cys443–Gln482, Val497–Gly536, Leu541–Pro592, and Val616–Cys648.

Belongs to the LRWD1 family. As to quaternary structure, integral component of the ORC complex. Directly interacts with CDT1, GMNN and ORC2. Interacts with ORC2 only when non-ubiquitinated; this interaction prevents LRWD1 ubiquitination and degradation. Some of these interactions are regulated in a cell-cycle dependent manner. Interaction with ORC1 occurs predominantly during G1. Association with phosphorylated ORC1 during mitosis is not efficient. Interaction with CDT1 occurs during G1 phase, as well as during mitosis with phosphorylated CDT1. Interaction with GMNN occurs from G1/S to mitosis. Interaction with ORC2 is observed throughout the cell cycle. The stoichiometry of the ORCA/ORC/CDT1/GMNN complex is 1:1:1:2. Interacts with CUL4A and DDB1; this interaction may lead to ubiquitination. Ubiquitinated; undergoes 'Lys-48'-linked polyubiquitination leading to proteasomal degradation. Ubiquitination occurs within the WD repeats at the end of the G1 phase. Ubiquitination may be catalyzed by the CUL4-DDB1 E3 ubiquitin-protein ligase complex and other E3 ligases. As to expression, testis-specific.

Its subcellular location is the nucleus. The protein localises to the chromosome. The protein resides in the centromere. It is found in the telomere. It localises to the cytoplasm. Its subcellular location is the cytoskeleton. The protein localises to the microtubule organizing center. The protein resides in the centrosome. It is found in the kinetochore. In terms of biological role, required for G1/S transition. Recruits and stabilizes the origin recognition complex (ORC) onto chromatin during G1 to establish pre-replication complex (preRC) and to heterochromatic sites in post-replicated cells. Binds a combination of DNA and histone methylation repressive marks on heterochromatin. Binds histone H3 and H4 trimethylation marks H3K9me3, H3K27me3 and H4K20me3 in a cooperative manner with DNA methylation. Required for silencing of major satellite repeats. May be important ORC2, ORC3 and ORC4 stability. This Mus musculus (Mouse) protein is Leucine-rich repeat and WD repeat-containing protein 1 (LRWD1).